We begin with the raw amino-acid sequence, 28 residues long: fur leader peptide (28 aa).

Its function is as follows. Cotranscribed with fur, it is essential for fur translation. The fur ribosomal binding site (RBS) is occluded by the 5'-mRNA secondary structure, which is opened by uof translation. The protein is fur leader peptide (uof) of Escherichia coli (strain K12).